Reading from the N-terminus, the 172-residue chain is Neudesin (172 aa).

The signal sequence occupies residues M1 to A31. In terms of domain architecture, Cytochrome b5 heme-binding spans V44–F129. K136 is modified (N6-acetyllysine). Residues D151–F172 are disordered. The segment covering F158–F172 has biased composition (basic and acidic residues).

It belongs to the cytochrome b5 family. MAPR subfamily. Interacts with PINK1 and PARK7. As to expression, ubiquitously expressed with high expression in heart. Over-expressed in various tumors including carcinomas of the uterine cervix, lymphoma, colon, lung, skin and leukemia, as well as carcinoma of the breast.

It localises to the secreted. Its subcellular location is the extracellular space. The protein resides in the mitochondrion. The protein localises to the endoplasmic reticulum. Functionally, acts as a neurotrophic factor in postnatal mature neurons enhancing neuronal survival. Promotes cell proliferation and neurogenesis in undifferentiated neural progenitor cells at the embryonic stage and inhibits differentiation of astrocytes. Its neurotrophic activity is exerted via MAPK1/ERK2, MAPK3/ERK1 and AKT1/AKT pathways. Neurotrophic activity is enhanced by binding to heme. Also acts as an anorexigenic neurotrophic factor that contributes to energy balance. In Homo sapiens (Human), this protein is Neudesin.